The sequence spans 121 residues: MAPKAEKKPKVEKRVPGKEGETSKKKAKKSNETYKIYIFKVLKQIDPNMGISSKSMSIINSIINDIFEKLAGESAKLARYNKKPTITSREIQTAVRLVFPGELAKHAVSEGTKAVTRFTVY.

The tract at residues 1-28 is disordered; it reads MAPKAEKKPKVEKRVPGKEGETSKKKAK. Residues Lys-7 and Lys-13 each carry the N6-acetyllysine modification.

It belongs to the histone H2B family. As to quaternary structure, the nucleosome is a histone octamer containing two molecules each of H2A, H2B, H3 and H4 assembled in one H3-H4 heterotetramer and two H2A-H2B heterodimers. The octamer wraps approximately 147 bp of DNA. Can be acetylated to form H2BK6ac and H2BK33ac. Expressed preferentially in meristematic tissues.

It localises to the nucleus. The protein resides in the chromosome. Functionally, core component of nucleosome. Nucleosomes wrap and compact DNA into chromatin, limiting DNA accessibility to the cellular machineries which require DNA as a template. Histones thereby play a central role in transcription regulation, DNA repair, DNA replication and chromosomal stability. DNA accessibility is regulated via a complex set of post-translational modifications of histones, also called histone code, and nucleosome remodeling. The polypeptide is Histone H2B.6 (TH123) (Triticum aestivum (Wheat)).